The chain runs to 743 residues: Putative pentatricopeptide repeat-containing protein At1g68930 (743 aa).

PPR repeat units lie at residues 40–70 (ETFL…IPQP), 71–101 (NLFS…LPDR), 102–132 (DGVT…MMRD), 138–172 (TRVT…GFES), 173–203 (YLLV…LDDR), 204–233 (NTVM…GMEK), 234–268 (DSVS…GLKM), 269–303 (DQYP…NFQD), 304–334 (HIYV…MKQK), 335–369 (NVVS…GIDP), 370–404 (DHYT…GLIH), 405–435 (YVTV…MNVR), 436–470 (DAVS…GLKP), 471–506 (DGVT…GIVP), and 507–537 (SIGH…MPFP). Positions 542 to 617 (GWTTLLSACR…EPGQSWIKWK (76 aa)) are type E motif. The interval 618-648 (GKLHSFSADDESSPYLDQIYAKLEELNNKII) is type E(+) motif. The tract at residues 649-743 (DNGYKPDTSF…DGTCSCGDFW (95 aa)) is type DYW motif.

Belongs to the PPR family. PCMP-H subfamily.

The protein is Putative pentatricopeptide repeat-containing protein At1g68930 (PCMP-H22) of Arabidopsis thaliana (Mouse-ear cress).